Consider the following 382-residue polypeptide: ATP phosphoribosyltransferase regulatory subunit (382 aa).

This sequence belongs to the class-II aminoacyl-tRNA synthetase family. HisZ subfamily. Heteromultimer composed of HisG and HisZ subunits.

The protein resides in the cytoplasm. It participates in amino-acid biosynthesis; L-histidine biosynthesis; L-histidine from 5-phospho-alpha-D-ribose 1-diphosphate: step 1/9. Required for the first step of histidine biosynthesis. May allow the feedback regulation of ATP phosphoribosyltransferase activity by histidine. The sequence is that of ATP phosphoribosyltransferase regulatory subunit from Burkholderia lata (strain ATCC 17760 / DSM 23089 / LMG 22485 / NCIMB 9086 / R18194 / 383).